Reading from the N-terminus, the 409-residue chain is Peptidase T (409 aa).

A Zn(2+)-binding site is contributed by His79. Asp81 is a catalytic residue. Asp140 contacts Zn(2+). The active-site Proton acceptor is Glu174. Residues Glu175, Asp197, and His379 each coordinate Zn(2+).

It belongs to the peptidase M20B family. The cofactor is Zn(2+).

Its subcellular location is the cytoplasm. The enzyme catalyses Release of the N-terminal residue from a tripeptide.. In terms of biological role, cleaves the N-terminal amino acid of tripeptides. The protein is Peptidase T of Lysinibacillus sphaericus (strain C3-41).